The following is a 194-amino-acid chain: Large ribosomal subunit protein bL12m (194 aa).

A mitochondrion-targeting transit peptide spans 1 to 33 (MSLRILAKRSSSIWMKTRVTPALISPITITTRF). N-linked (GlcNAc...) asparagine glycosylation is present at Asn34. Residues 101 to 120 (AGNVPSSTGEAGSGAEEEAK) are disordered. The span at 105-114 (PSSTGEAGSG) shows a compositional bias: low complexity.

Belongs to the bacterial ribosomal protein bL12 family. In terms of assembly, component of the mitochondrial large ribosomal subunit (mt-LSU). Mature yeast 74S mitochondrial ribosomes consist of a small (37S) and a large (54S) subunit. The 37S small subunit contains a 15S ribosomal RNA (15S mt-rRNA) and 34 different proteins. The 54S large subunit contains a 21S rRNA (21S mt-rRNA) and 46 different proteins. Post-translationally, N-glycosylated.

Its subcellular location is the mitochondrion. In terms of biological role, component of the mitochondrial ribosome (mitoribosome), a dedicated translation machinery responsible for the synthesis of mitochondrial genome-encoded proteins, including at least some of the essential transmembrane subunits of the mitochondrial respiratory chain. The mitoribosomes are attached to the mitochondrial inner membrane and translation products are cotranslationally integrated into the membrane. The sequence is that of Large ribosomal subunit protein bL12m (MNP1) from Saccharomyces cerevisiae (strain ATCC 204508 / S288c) (Baker's yeast).